Here is a 152-residue protein sequence, read N- to C-terminus: Ribonuclease H (152 aa).

The 142-residue stretch at 6–147 folds into the RNase H type-1 domain; it reads KKNRVIAYTD…ADELANKAIA (142 aa). The Mg(2+) site is built by Asp15, Glu53, Asp75, and Asp139.

This sequence belongs to the RNase H family. As to quaternary structure, monomer. Mg(2+) is required as a cofactor.

It is found in the cytoplasm. It catalyses the reaction Endonucleolytic cleavage to 5'-phosphomonoester.. Functionally, endonuclease that specifically degrades the RNA of RNA-DNA hybrids. This chain is Ribonuclease H, found in Francisella tularensis subsp. tularensis (strain FSC 198).